The chain runs to 24 residues: Caerulein precursor fragment BM1 (24 aa).

In terms of tissue distribution, expressed by the skin glands.

It is found in the secreted. Its function is as follows. Antimicrobial peptide. This is Caerulein precursor fragment BM1 from Xenopus boumbaensis (Mawa clawed frog).